Reading from the N-terminus, the 159-residue chain is Cytochrome c-type biogenesis protein CcmE (159 aa).

Residues 1-8 (MNIRRKNR) lie on the Cytoplasmic side of the membrane. A helical; Signal-anchor for type II membrane protein transmembrane segment spans residues 9-29 (LWIACAVLAGLALTIGLVLYA). Over 30–159 (LRSNIDLFYT…PASVYKDPAS (130 aa)) the chain is Periplasmic. Heme-binding residues include histidine 130 and tyrosine 134. Residues 132-147 (ENYTPPEVEKAMEANH) are compositionally biased toward basic and acidic residues. Residues 132–159 (ENYTPPEVEKAMEANHRRPASVYKDPAS) form a disordered region.

This sequence belongs to the CcmE/CycJ family.

It is found in the cell inner membrane. Functionally, heme chaperone required for the biogenesis of c-type cytochromes. Transiently binds heme delivered by CcmC and transfers the heme to apo-cytochromes in a process facilitated by CcmF and CcmH. The sequence is that of Cytochrome c-type biogenesis protein CcmE from Escherichia coli (strain 55989 / EAEC).